An 84-amino-acid chain; its full sequence is Small ribosomal subunit protein uS17 (84 aa).

The protein belongs to the universal ribosomal protein uS17 family. As to quaternary structure, part of the 30S ribosomal subunit.

Functionally, one of the primary rRNA binding proteins, it binds specifically to the 5'-end of 16S ribosomal RNA. In Klebsiella pneumoniae subsp. pneumoniae (strain ATCC 700721 / MGH 78578), this protein is Small ribosomal subunit protein uS17.